Reading from the N-terminus, the 340-residue chain is RNA 3'-terminal phosphate cyclase (340 aa).

Residues Gln-102 and 284–288 (FLGDQ) each bind ATP. Catalysis depends on His-308, which acts as the Tele-AMP-histidine intermediate.

This sequence belongs to the RNA 3'-terminal cyclase family. Type 1 subfamily.

The protein resides in the cytoplasm. The enzyme catalyses a 3'-end 3'-phospho-ribonucleotide-RNA + ATP = a 3'-end 2',3'-cyclophospho-ribonucleotide-RNA + AMP + diphosphate. In terms of biological role, catalyzes the conversion of 3'-phosphate to a 2',3'-cyclic phosphodiester at the end of RNA. The mechanism of action of the enzyme occurs in 3 steps: (A) adenylation of the enzyme by ATP; (B) transfer of adenylate to an RNA-N3'P to produce RNA-N3'PP5'A; (C) and attack of the adjacent 2'-hydroxyl on the 3'-phosphorus in the diester linkage to produce the cyclic end product. The biological role of this enzyme is unknown but it is likely to function in some aspects of cellular RNA processing. This Thermococcus onnurineus (strain NA1) protein is RNA 3'-terminal phosphate cyclase.